Reading from the N-terminus, the 147-residue chain is Hemoglobin subunit beta (147 aa).

One can recognise a Globin domain in the interval 3–147; sequence HWTAEEKQII…VAHALARKYH (145 aa). Residues His64 and His93 each contribute to the heme b site.

Heterotetramer of two alpha (or alpha-D) and two beta chains. In terms of tissue distribution, red blood cells.

Its function is as follows. Involved in oxygen transport from the lung to the various peripheral tissues. The beta chain is a component of adult hemoglobin A and D. The protein is Hemoglobin subunit beta of Aythya fuligula (Tufted duck).